A 201-amino-acid chain; its full sequence is Recombination protein RecR (201 aa).

Residues 57–72 (CADCRTFTEQEKCNIC) form a C4-type zinc finger. Residues 81–176 (GQICVVESPA…DASRIAHGVP (96 aa)) form the Toprim domain.

This sequence belongs to the RecR family.

Functionally, may play a role in DNA repair. It seems to be involved in an RecBC-independent recombinational process of DNA repair. It may act with RecF and RecO. The protein is Recombination protein RecR of Cronobacter sakazakii (strain ATCC BAA-894) (Enterobacter sakazakii).